Reading from the N-terminus, the 99-residue chain is UPF0751 protein BCE_A0020 (99 aa).

This sequence belongs to the UPF0751 family.

The sequence is that of UPF0751 protein BCE_A0020 from Bacillus cereus (strain ATCC 10987 / NRS 248).